Reading from the N-terminus, the 313-residue chain is Calcyphosin-2 (313 aa).

EF-hand domains lie at 144 to 179, 180 to 215, and 216 to 251; these read RILT…FHLE, VSEK…EMNE, and YRKS…KKHS. Ca(2+) contacts are provided by Asp-193, Asn-195, Asn-197, Lys-199, and Glu-204.

This chain is Calcyphosin-2 (CAPS2), found in Macaca fascicularis (Crab-eating macaque).